Here is a 306-residue protein sequence, read N- to C-terminus: WUSCHEL-related homeobox 13 (306 aa).

A compositionally biased stretch (pro residues) spans 1–11; it reads MMALGVPPPPS. 3 disordered regions span residues 1–20, 103–142, and 190–276; these read MMALGVPPPPSRAYVSGPLR, PRSHGHRTGGGGFSLKSSPFSSVGEERVPDPKPRRNPRPE, and SRSK…ARAT. The span at 126–142 shows a compositional bias: basic and acidic residues; the sequence is GEERVPDPKPRRNPRPE. Positions 132–196 form a DNA-binding region, homeobox; WUS-type; that stretch reads DPKPRRNPRP…NRKSRSKNKL (65 aa). The segment covering 199–210 has biased composition (gly residues); that stretch reads GGTGRAGLGLGG. Positions 231–242 are enriched in pro residues; that stretch reads FTPPPILPPQPV. The segment covering 243–270 has biased composition (low complexity); it reads QPQQQLVSPVAAPTSLSSSSSDRSSGSS.

The protein belongs to the WUS homeobox family.

Its subcellular location is the nucleus. In terms of biological role, transcription factor which may be involved in developmental processes. This is WUSCHEL-related homeobox 13 (WOX13) from Oryza sativa subsp. japonica (Rice).